A 289-amino-acid chain; its full sequence is Porin (289 aa).

As to quaternary structure, homotrimer.

The protein localises to the cell outer membrane. Forms channels that allow the passive diffusion of small hydrophilic solutes up to an exclusion limit of about 0.6 kDa. The sequence is that of Porin (opmA) from Fuscovulum blasticum (Rhodobacter blasticus).